Consider the following 254-residue polypeptide: Splicing factor tls1 (254 aa).

The segment covering 69-83 has biased composition (basic and acidic residues); it reads KEKQLNTANEPHEAN. Disordered regions lie at residues 69–90 and 195–216; these read KEKQ…SAQS and RKRQ…LRTS. Residues 195 to 204 are compositionally biased toward basic residues; that stretch reads RKRQKKRARM. Positions 205 to 216 are enriched in basic and acidic residues; it reads KEKLDSKALRTS.

Belongs to the TLS1 family. In terms of assembly, component of the spliceosome. Interacts with brr2.

The protein localises to the cytoplasm. It localises to the nucleus. Functionally, plays a role in pre-mRNA splicing by facilitating excision of introns featuring long spacing between the branchpoint and 3'-splice site. Assists the splicing of several components involved in chromatin organization, such as several shelterin complex subunits. In Schizosaccharomyces pombe (strain 972 / ATCC 24843) (Fission yeast), this protein is Splicing factor tls1.